The following is a 92-amino-acid chain: MELNILSKTDNELEVKLKGETHTLLNILKDLLIKDQRVEIAFYDMKYVSISDPILYIKTDGTNPIEVLKDAASQIISQCDEFTDVFSKAVNA.

Belongs to the archaeal Rpo11/eukaryotic RPB11/RPC19 RNA polymerase subunit family. Part of the RNA polymerase complex.

The protein localises to the cytoplasm. It catalyses the reaction RNA(n) + a ribonucleoside 5'-triphosphate = RNA(n+1) + diphosphate. Functionally, DNA-dependent RNA polymerase (RNAP) catalyzes the transcription of DNA into RNA using the four ribonucleoside triphosphates as substrates. The protein is DNA-directed RNA polymerase subunit Rpo11 of Methanosarcina barkeri (strain Fusaro / DSM 804).